The primary structure comprises 147 residues: Hemoglobin subunit beta (147 aa).

In terms of domain architecture, Globin spans 3-147; it reads NWTKTEKATI…VMSALGKQYH (145 aa). Positions 64 and 93 each coordinate heme b.

The protein belongs to the globin family. Heterotetramer of two alpha chains and two beta chains. As to expression, red blood cells.

Its function is as follows. Involved in oxygen transport from gills to the various peripheral tissues. The sequence is that of Hemoglobin subunit beta (hbb) from Gymnodraco acuticeps (Antarctic dragonfish).